Reading from the N-terminus, the 91-residue chain is Islet amyloid polypeptide (91 aa).

The first 22 residues, M1 to G22, serve as a signal peptide directing secretion. A propeptide spanning residues G23–E33 is cleaved from the precursor. A disulfide bond links C37 and C42. Tyrosine amide is present on Y72. Residues V78–I91 constitute a propeptide that is removed on maturation.

The protein belongs to the calcitonin family. In terms of assembly, can form homodimers. Interacts with IDE and INS. Interaction with INS inhibits homodimerization and fibril formation.

The protein localises to the secreted. Its function is as follows. Amylin/IAPP is a glucoregulatory peptide hormone that plays an important role in the regulation of energy homeostasis. Selectively inhibits insulin-stimulated glucose utilization and glycogen deposition in muscle, while not affecting adipocyte glucose metabolism. IAPP function is mediated by the CALCR-RAMPs (AMYRs) receptor complexes. Amylin can also bind CALCR receptor in the absence of RAMPs, although it is more selective for AMYRs. The sequence is that of Islet amyloid polypeptide (IAPP) from Bos taurus (Bovine).